Here is a 561-residue protein sequence, read N- to C-terminus: Amidophosphoribosyltransferase 2, chloroplastic (561 aa).

Low complexity predominate over residues 1–27; that stretch reads MAATSSISSSLSLNAKPNKLSNNNNNN. The tract at residues 1-36 is disordered; the sequence is MAATSSISSSLSLNAKPNKLSNNNNNNKPHRFLRNP. The N-terminal 53 residues, 1–53, are a transit peptide targeting the chloroplast; the sequence is MAATSSISSSLSLNAKPNKLSNNNNNNKPHRFLRNPFLNPSSSSFSPLPASIS. The active-site Nucleophile is Cys87. Positions 87–307 constitute a Glutamine amidotransferase type-2 domain; that stretch reads CGVVGIYGDS…PGEVLVVDKD (221 aa). [4Fe-4S] cluster is bound by residues Cys323, Cys469, Cys520, and Cys523.

It in the C-terminal section; belongs to the purine/pyrimidine phosphoribosyltransferase family. The cofactor is [4Fe-4S] cluster. Mg(2+) serves as cofactor. Mostly expressed in leaves, and, to a lower extent, in cotyledons.

Its subcellular location is the plastid. It is found in the chloroplast stroma. The catalysed reaction is 5-phospho-beta-D-ribosylamine + L-glutamate + diphosphate = 5-phospho-alpha-D-ribose 1-diphosphate + L-glutamine + H2O. The protein operates within purine metabolism; IMP biosynthesis via de novo pathway; N(1)-(5-phospho-D-ribosyl)glycinamide from 5-phospho-alpha-D-ribose 1-diphosphate: step 1/2. Its activity is regulated as follows. Inhibited by the phenyltriazole acetic acid compound [5-(4-chlorophenyl)-1-isopropyl-1H-[1,2,4]triazol-3-yl]-acetic acid (DAS734), a bleaching herbicide. Functionally, catalyzes the first committed step of 'de novo purine biosynthesis from glutamine. Required for chloroplast biogenesis and cell division. Confers sensitivity to the phenyltriazole acetic acid compound [5-(4-chlorophenyl)-1-isopropyl-1H-[1,2,4]triazol-3-yl]-acetic acid (DAS734), a bleaching herbicide. The chain is Amidophosphoribosyltransferase 2, chloroplastic (ASE2) from Arabidopsis thaliana (Mouse-ear cress).